We begin with the raw amino-acid sequence, 735 residues long: Phosphoribosylformylglycinamidine synthase subunit PurL (735 aa).

H49 is a catalytic residue. ATP contacts are provided by Y52 and K91. E93 lines the Mg(2+) pocket. Residues 94–97 (SHNH) and R116 contribute to the substrate site. Catalysis depends on H95, which acts as the Proton acceptor. A Mg(2+)-binding site is contributed by D117. Q240 contacts substrate. D268 is a Mg(2+) binding site. Residue 312-314 (ESQ) participates in substrate binding. ATP-binding residues include D493 and G530. N531 contributes to the Mg(2+) binding site. Residue S533 participates in substrate binding.

The protein belongs to the FGAMS family. In terms of assembly, monomer. Part of the FGAM synthase complex composed of 1 PurL, 1 PurQ and 2 PurS subunits.

Its subcellular location is the cytoplasm. The catalysed reaction is N(2)-formyl-N(1)-(5-phospho-beta-D-ribosyl)glycinamide + L-glutamine + ATP + H2O = 2-formamido-N(1)-(5-O-phospho-beta-D-ribosyl)acetamidine + L-glutamate + ADP + phosphate + H(+). Its pathway is purine metabolism; IMP biosynthesis via de novo pathway; 5-amino-1-(5-phospho-D-ribosyl)imidazole from N(2)-formyl-N(1)-(5-phospho-D-ribosyl)glycinamide: step 1/2. Functionally, part of the phosphoribosylformylglycinamidine synthase complex involved in the purines biosynthetic pathway. Catalyzes the ATP-dependent conversion of formylglycinamide ribonucleotide (FGAR) and glutamine to yield formylglycinamidine ribonucleotide (FGAM) and glutamate. The FGAM synthase complex is composed of three subunits. PurQ produces an ammonia molecule by converting glutamine to glutamate. PurL transfers the ammonia molecule to FGAR to form FGAM in an ATP-dependent manner. PurS interacts with PurQ and PurL and is thought to assist in the transfer of the ammonia molecule from PurQ to PurL. In Azorhizobium caulinodans (strain ATCC 43989 / DSM 5975 / JCM 20966 / LMG 6465 / NBRC 14845 / NCIMB 13405 / ORS 571), this protein is Phosphoribosylformylglycinamidine synthase subunit PurL.